We begin with the raw amino-acid sequence, 158 residues long: 6,7-dimethyl-8-ribityllumazine synthase (158 aa).

5-amino-6-(D-ribitylamino)uracil contacts are provided by residues phenylalanine 24, 58–60 (AFE), and 82–84 (AVI). (2S)-2-hydroxy-3-oxobutyl phosphate is bound at residue 87 to 88 (GT). Histidine 90 serves as the catalytic Proton donor. 5-amino-6-(D-ribitylamino)uracil is bound at residue phenylalanine 115. Residue arginine 129 coordinates (2S)-2-hydroxy-3-oxobutyl phosphate.

This sequence belongs to the DMRL synthase family. In terms of assembly, forms an icosahedral capsid composed of 60 subunits, arranged as a dodecamer of pentamers.

It carries out the reaction (2S)-2-hydroxy-3-oxobutyl phosphate + 5-amino-6-(D-ribitylamino)uracil = 6,7-dimethyl-8-(1-D-ribityl)lumazine + phosphate + 2 H2O + H(+). The protein operates within cofactor biosynthesis; riboflavin biosynthesis; riboflavin from 2-hydroxy-3-oxobutyl phosphate and 5-amino-6-(D-ribitylamino)uracil: step 1/2. Catalyzes the formation of 6,7-dimethyl-8-ribityllumazine by condensation of 5-amino-6-(D-ribitylamino)uracil with 3,4-dihydroxy-2-butanone 4-phosphate. This is the penultimate step in the biosynthesis of riboflavin. In Pseudomonas paraeruginosa (strain DSM 24068 / PA7) (Pseudomonas aeruginosa (strain PA7)), this protein is 6,7-dimethyl-8-ribityllumazine synthase.